Consider the following 388-residue polypeptide: Processive diacylglycerol beta-glucosyltransferase (388 aa).

This sequence belongs to the glycosyltransferase 28 family. UgtP subfamily.

It is found in the cell membrane. It catalyses the reaction a 1,2-diacyl-3-O-(beta-D-glucopyranosyl)-sn-glycerol + UDP-alpha-D-glucose = a 1,2-diacyl-3-O-(beta-D-Glc-(1-&gt;6)-beta-D-Glc)-sn-glycerol + UDP + H(+). It carries out the reaction a 1,2-diacyl-3-O-(beta-D-Glc-(1-&gt;6)-beta-D-Glc)-sn-glycerol + UDP-alpha-D-glucose = a 1,2-diacyl-3-O-(beta-D-Glc-(1-&gt;6)-beta-D-Glc-(1-&gt;6)-beta-D-Glc)-sn-glycerol + UDP + H(+). The enzyme catalyses a 1,2-diacyl-sn-glycerol + UDP-alpha-D-glucose = a 1,2-diacyl-3-O-(beta-D-glucopyranosyl)-sn-glycerol + UDP + H(+). Its pathway is glycolipid metabolism; diglucosyl-diacylglycerol biosynthesis. Processive glucosyltransferase involved in the biosynthesis of both the bilayer- and non-bilayer-forming membrane glucolipids. Is able to successively transfer up to three glucosyl residues to diacylglycerol (DAG), thereby catalyzing the formation of beta-monoglucosyl-DAG (3-O-(beta-D-glucopyranosyl)-1,2-diacyl-sn-glycerol), beta-diglucosyl-DAG (3-O-(beta-D-glucopyranosyl-beta-(1-&gt;6)-D-glucopyranosyl)-1,2-diacyl-sn-glycerol) and beta-triglucosyl-DAG (3-O-(beta-D-glucopyranosyl-beta-(1-&gt;6)-D-glucopyranosyl-beta-(1-&gt;6)-D-glucopyranosyl)-1,2-diacyl-sn-glycerol). Beta-diglucosyl-DAG is the predominant glycolipid found in Bacillales and is also used as a membrane anchor for lipoteichoic acid (LTA). The protein is Processive diacylglycerol beta-glucosyltransferase of Bacillus cereus (strain G9842).